A 478-amino-acid chain; its full sequence is Ribosome biogenesis protein NOP53 (478 aa).

Gly residues predominate over residues 1 to 10 (MAAGGSGVGG). Residues 1–51 (MAAGGSGVGGKRSSKSDADSGFLGLRPTSVDPALRRRRRGPRNKKRGWRRL) are disordered. At Ala2 the chain carries N-acetylalanine. Position 29 is a phosphoserine (Ser29). Residues 35–49 (RRRRRGPRNKKRGWR) are compositionally biased toward basic residues. Phosphoserine is present on residues Ser93 and Ser305. Positions 148–431 (KEQLWEKLAK…SELTDSLRTL (284 aa)) are mediates interaction with CDKN2A/isoform tumor suppressor ARF. The segment at 181-478 (KPGPQDTVER…EKRAFREIQL (298 aa)) is mediates interaction with NF2. The segment at 303–344 (EESDGEGEPGQGEGPEAGDAEVCPTPARLATTEKKTEQQRRR) is disordered. Basic and acidic residues predominate over residues 333 to 342 (TTEKKTEQQR). Residues 342–386 (RRREKAVHRLRVQQAALRAARLRHQELFRLRGIKAQVALRLAELA) form a mediates interaction with human herpesvirus 8 protein ORF16 region. 2 nucleolar localization signal regions span residues 347–395 (AVHR…RQAR) and 396–478 (REAE…EIQL).

This sequence belongs to the NOP53 family. In terms of assembly, homooligomer. Interacts with PTEN; regulates PTEN phosphorylation and increases its stability. Interacts with RPL11; retains RPL11 into the nucleolus. Interacts with CDKN2A/isoform tumor suppressor ARF; the interaction is direct and promotes ARF nucleoplasmic relocalization and ubiquitin-mediated proteasomal degradation. Interacts with NPM1; the interaction is direct and competitive with MYC. Interacts with NF2 (via FERM domain); the interaction is direct. Interacts with p53/TP53 (via the oligomerization region); the interaction is direct and may prevent the MDM2-mediated proteasomal degradation of p53/TP53. Interacts with RIGI; may regulate RIGI through USP15-mediated 'Lys-63'-linked deubiquitination. Interacts with UBTF. (Microbial infection) Interacts with herpes simplex virus 1 early proteins ICP22 and ICP0. As to quaternary structure, (Microbial infection) Interacts with Human herpesvirus 8 protein ORF16; may sequester ORF16 in host nucleolus and reduce its antiapoptotic activity. In terms of processing, ubiquitin-mediated proteasomal degradation is regulated by c-JUN. It is associated with relocalization to the nucleoplasm and decreased homooligomerization. Phosphorylated upon DNA damage probably by ATM and DNA-PK; may regulate NOP53 degradation. As to expression, expressed at high levels in heart and pancreas, moderate levels in placenta, liver, skeletal muscle, and kidney, and low levels in brain and lung.

It is found in the nucleus. Its subcellular location is the nucleolus. The protein localises to the nucleoplasm. Functionally, nucleolar protein which is involved in the integration of the 5S RNP into the ribosomal large subunit during ribosome biogenesis. In ribosome biogenesis, may also play a role in rRNA transcription. Also functions as a nucleolar sensor that regulates the activation of p53/TP53 in response to ribosome biogenesis perturbation, DNA damage and other stress conditions. DNA damage or perturbation of ribosome biogenesis disrupt the interaction between NOP53 and RPL11 allowing RPL11 transport to the nucleoplasm where it can inhibit MDM2 and allow p53/TP53 activation. It may also positively regulate the function of p53/TP53 in cell cycle arrest and apoptosis through direct interaction, preventing its MDM2-dependent ubiquitin-mediated proteasomal degradation. Originally identified as a tumor suppressor, it may also play a role in cell proliferation and apoptosis by positively regulating the stability of PTEN, thereby antagonizing the PI3K-AKT/PKB signaling pathway. May also inhibit cell proliferation and increase apoptosis through its interaction with NF2. May negatively regulate NPM1 by regulating its nucleoplasmic localization, oligomerization and ubiquitin-mediated proteasomal degradation. Thereby, may prevent NPM1 interaction with MYC and negatively regulate transcription mediated by the MYC-NPM1 complex. May also regulate cellular aerobic respiration. In the cellular response to viral infection, may play a role in the attenuation of interferon-beta through the inhibition of RIGI. This is Ribosome biogenesis protein NOP53 from Homo sapiens (Human).